The primary structure comprises 308 residues: Probable serine/threonine-protein kinase KIN28 homolog (308 aa).

A Protein kinase domain is found at 4–294 (YIRERRLGEG…CDDAIKHPYF (291 aa)). ATP-binding positions include 10–18 (LGEGTYAVI) and Lys46. Asp139 serves as the catalytic Proton acceptor.

This sequence belongs to the protein kinase superfamily. CMGC Ser/Thr protein kinase family. CDC2/CDKX subfamily. As to quaternary structure, component of the TFIIH holo complex.

The protein resides in the nucleus. It catalyses the reaction [DNA-directed RNA polymerase] + ATP = phospho-[DNA-directed RNA polymerase] + ADP + H(+). In terms of biological role, protein kinase component of transcription factor IIH (TFIIH) which phosphorylates the C-terminal domain of RNA polymerase II during transition from transcription to elongation after preinitiation complex (PIC) formation, thereby positively regulating transcription. Essential for both basal and activated transcription, and is involved in nucleotide excision repair (NER) of damaged DNA. This is Probable serine/threonine-protein kinase KIN28 homolog (KIN28) from Encephalitozoon cuniculi (strain GB-M1) (Microsporidian parasite).